The primary structure comprises 383 residues: Transcription termination factor Rho (383 aa).

Residues 1–22 (MTIETTTKKRPRAARPPRPRES) are disordered. Over residues 8–17 (KKRPRAARPP) the composition is skewed to basic residues. The Rho RNA-BD domain maps to 26 to 93 (LETVAGLLDV…AEVESVNGST (68 aa)). ATP contacts are provided by residues 132 to 137 (GKGQRG), 144 to 149 (KAGKTM), and R175.

The protein belongs to the Rho family. Homohexamer. The homohexamer assembles into an open ring structure.

Its function is as follows. Facilitates transcription termination by a mechanism that involves Rho binding to the nascent RNA, activation of Rho's RNA-dependent ATPase activity, and release of the mRNA from the DNA template. The chain is Transcription termination factor Rho from Streptosporangium roseum (strain ATCC 12428 / DSM 43021 / JCM 3005 / KCTC 9067 / NCIMB 10171 / NRRL 2505 / NI 9100).